We begin with the raw amino-acid sequence, 230 residues long: Large ribosomal subunit protein uL1 (230 aa).

This sequence belongs to the universal ribosomal protein uL1 family. In terms of assembly, part of the 50S ribosomal subunit.

In terms of biological role, binds directly to 23S rRNA. The L1 stalk is quite mobile in the ribosome, and is involved in E site tRNA release. Protein L1 is also a translational repressor protein, it controls the translation of the L11 operon by binding to its mRNA. This is Large ribosomal subunit protein uL1 from Lactobacillus acidophilus (strain ATCC 700396 / NCK56 / N2 / NCFM).